A 652-amino-acid polypeptide reads, in one-letter code: Vitrin (652 aa).

A signal peptide spans 1-26 (MGIVVLTMKASVIEMFLVLLVTGIQS). Residues 40-133 (TVPQISCDVR…LSLPRWRESF (94 aa)) enclose the LCCL domain. Disulfide bonds link C46–C62 and C66–C86. Disordered stretches follow at residues 137-181 (EGKP…AAQP) and 196-231 (THTT…EPAL). Residues 145 to 158 (TYPSSLTYSSSKSP) show a composition bias toward low complexity. Residues 196-212 (THTTLPKPSPSAGSTAS) show a composition bias toward polar residues. VWFA domains follow at residues 267–452 (DLSF…VKRV) and 469–638 (DIGF…VPKV). N494 carries N-linked (GlcNAc...) asparagine glycosylation.

In terms of assembly, binds dermatan sulfate and chondroitin sulfate.

The protein localises to the secreted. It is found in the extracellular space. It localises to the extracellular matrix. Promotes matrix assembly and cell adhesiveness. Plays a role in spinal cord formation by regulating the proliferation and differentiation of neural stem cells. The protein is Vitrin (VIT) of Bos taurus (Bovine).